We begin with the raw amino-acid sequence, 126 residues long: MARIAGVDLPRDKRIEIALTYIYGIGLTRSKEILAKTGVNPDTRTRDLTDADIAALRAAIDEYQVEGDLRRLEAMNIKRLMDIGCYRGRRHRLGLPVRGQRTRTNARTRRGSRRTVAGKKKPAAKK.

The interval 96 to 126 (PVRGQRTRTNARTRRGSRRTVAGKKKPAAKK) is disordered. A compositionally biased stretch (basic residues) spans 100–126 (QRTRTNARTRRGSRRTVAGKKKPAAKK).

It belongs to the universal ribosomal protein uS13 family. As to quaternary structure, part of the 30S ribosomal subunit. Forms a loose heterodimer with protein S19. Forms two bridges to the 50S subunit in the 70S ribosome.

Its function is as follows. Located at the top of the head of the 30S subunit, it contacts several helices of the 16S rRNA. In the 70S ribosome it contacts the 23S rRNA (bridge B1a) and protein L5 of the 50S subunit (bridge B1b), connecting the 2 subunits; these bridges are implicated in subunit movement. Contacts the tRNAs in the A and P-sites. The chain is Small ribosomal subunit protein uS13 from Thermosynechococcus vestitus (strain NIES-2133 / IAM M-273 / BP-1).